A 208-amino-acid polypeptide reads, in one-letter code: Ribosomal RNA large subunit methyltransferase E (208 aa).

Residues G63, W65, D83, D99, and D124 each coordinate S-adenosyl-L-methionine. Catalysis depends on K164, which acts as the Proton acceptor.

It belongs to the class I-like SAM-binding methyltransferase superfamily. RNA methyltransferase RlmE family.

The protein resides in the cytoplasm. The enzyme catalyses uridine(2552) in 23S rRNA + S-adenosyl-L-methionine = 2'-O-methyluridine(2552) in 23S rRNA + S-adenosyl-L-homocysteine + H(+). Specifically methylates the uridine in position 2552 of 23S rRNA at the 2'-O position of the ribose in the fully assembled 50S ribosomal subunit. The protein is Ribosomal RNA large subunit methyltransferase E of Blochmanniella pennsylvanica (strain BPEN).